A 499-amino-acid chain; its full sequence is Cytochrome P450 71A27 (499 aa).

Residues Met-3–Leu-23 traverse the membrane as a helical segment. Residue Cys-438 coordinates heme.

The protein belongs to the cytochrome P450 family. Heme is required as a cofactor.

Its subcellular location is the membrane. The sequence is that of Cytochrome P450 71A27 (CYP71A27) from Arabidopsis thaliana (Mouse-ear cress).